The sequence spans 340 residues: Ketol-acid reductoisomerase (NADP(+)) (340 aa).

The KARI N-terminal Rossmann domain occupies Met-1–Thr-183. NADP(+) contacts are provided by residues Phe-26–Gln-29, Arg-49, Ser-52, Ser-54, and Asp-84–Gln-87. His-109 is a catalytic residue. Residue Gly-135 participates in NADP(+) binding. Positions Thr-184–Ile-329 constitute a KARI C-terminal knotted domain. Residues Asp-192, Glu-196, Glu-228, and Glu-232 each contribute to the Mg(2+) site. Substrate is bound at residue Ser-253.

It belongs to the ketol-acid reductoisomerase family. Requires Mg(2+) as cofactor.

It carries out the reaction (2R)-2,3-dihydroxy-3-methylbutanoate + NADP(+) = (2S)-2-acetolactate + NADPH + H(+). The enzyme catalyses (2R,3R)-2,3-dihydroxy-3-methylpentanoate + NADP(+) = (S)-2-ethyl-2-hydroxy-3-oxobutanoate + NADPH + H(+). Its pathway is amino-acid biosynthesis; L-isoleucine biosynthesis; L-isoleucine from 2-oxobutanoate: step 2/4. It functions in the pathway amino-acid biosynthesis; L-valine biosynthesis; L-valine from pyruvate: step 2/4. Its function is as follows. Involved in the biosynthesis of branched-chain amino acids (BCAA). Catalyzes an alkyl-migration followed by a ketol-acid reduction of (S)-2-acetolactate (S2AL) to yield (R)-2,3-dihydroxy-isovalerate. In the isomerase reaction, S2AL is rearranged via a Mg-dependent methyl migration to produce 3-hydroxy-3-methyl-2-ketobutyrate (HMKB). In the reductase reaction, this 2-ketoacid undergoes a metal-dependent reduction by NADPH to yield (R)-2,3-dihydroxy-isovalerate. The polypeptide is Ketol-acid reductoisomerase (NADP(+)) (Campylobacter jejuni (strain RM1221)).